A 460-amino-acid chain; its full sequence is L-seryl-tRNA(Sec) selenium transferase (460 aa).

Lys293 is subject to N6-(pyridoxal phosphate)lysine.

It belongs to the SelA family. It depends on pyridoxal 5'-phosphate as a cofactor.

It is found in the cytoplasm. It carries out the reaction L-seryl-tRNA(Sec) + selenophosphate + H(+) = L-selenocysteinyl-tRNA(Sec) + phosphate. It participates in aminoacyl-tRNA biosynthesis; selenocysteinyl-tRNA(Sec) biosynthesis; selenocysteinyl-tRNA(Sec) from L-seryl-tRNA(Sec) (bacterial route): step 1/1. Functionally, converts seryl-tRNA(Sec) to selenocysteinyl-tRNA(Sec) required for selenoprotein biosynthesis. The chain is L-seryl-tRNA(Sec) selenium transferase from Haemophilus ducreyi (strain 35000HP / ATCC 700724).